The primary structure comprises 116 residues: Non-specific lipid-transfer protein 5 (116 aa).

Residues 1–24 (MARSMKLACVVLVMCMIVAPMAEG) form the signal peptide. Cystine bridges form between Cys28-Cys75, Cys38-Cys52, Cys53-Cys98, and Cys73-Cys112.

The protein belongs to the plant LTP family.

Its function is as follows. Plant non-specific lipid-transfer proteins transfer phospholipids as well as galactolipids across membranes. May play a role in wax or cutin deposition in the cell walls of expanding epidermal cells and certain secretory tissues. This is Non-specific lipid-transfer protein 5 from Lens culinaris (Lentil).